The primary structure comprises 1776 residues: Signal-induced proliferation-associated 1-like protein 3 (1776 aa).

2 disordered regions span residues 41-157 (AQNG…GRAF) and 240-325 (PGAL…EASR). The span at 54–69 (PAATTTRPSPTTPAMP) shows a compositional bias: low complexity. 2 stretches are compositionally biased toward polar residues: residues 89-99 (EQSNPSPSQDT) and 112-129 (RNLQ…SSGS). Ser-94 is subject to Phosphoserine. Residues 131–140 (AFHRLSRRRS) show a composition bias toward basic residues. Ser-140 carries the phosphoserine modification. Residues 257 to 268 (GQPTKDSLQSLQ) show a composition bias toward polar residues. Ser-394 bears the Phosphoserine mark. Positions 438-461 (SRASVGSPGGSSEAHMAEPTLSTH) are disordered. In terms of domain architecture, Rap-GAP spans 605–822 (LLKLDEQGLC…RTRQEYLKDL (218 aa)). The PDZ domain occupies 960-1024 (DMTLRRNGLG…DQMIDLLRTS (65 aa)). Disordered stretches follow at residues 1040-1104 (PRRG…AQSL), 1117-1164 (RESQ…ATYA), and 1184-1632 (DPHF…LDPG). 2 stretches are compositionally biased toward polar residues: residues 1074-1104 (APWQ…AQSL) and 1151-1160 (PSGSFSTPGS). The segment covering 1190-1201 (DGMSSGDSSSGG) has biased composition (low complexity). The segment covering 1239–1255 (SRQDAAGKDSPNRHSKG) has biased composition (basic and acidic residues). Low complexity predominate over residues 1260–1275 (SSHSSSNTLSSNASSS). Positions 1298–1316 (GGSSDSGIDTTLYTSSPSC) are enriched in polar residues. The span at 1344–1357 (SAGRPHPVDRRREV) shows a compositional bias: basic and acidic residues. Ser-1358 is subject to Phosphoserine. Thr-1381 carries the phosphothreonine modification. A compositionally biased stretch (polar residues) spans 1409 to 1436 (VYKTASAETPRPSQLSQCSPFQLSTSVP). Lys-1442 carries the N6-acetyllysine modification. Residues 1503-1512 (TIEDDLKKLI) show a composition bias toward basic and acidic residues. 2 stretches are compositionally biased toward polar residues: residues 1526–1541 (GQSP…SDES) and 1566–1578 (LFTS…SSTL). 2 positions are modified to phosphoserine: Ser-1538 and Ser-1541. Low complexity predominate over residues 1589–1601 (PPSGAPSTTPATG). Phosphoserine is present on residues Ser-1614 and Ser-1617. Over residues 1620–1630 (DGRDRPLRRLD) the composition is skewed to basic and acidic residues. The residue at position 1672 (Ser-1672) is a Phosphoserine. The tract at residues 1678–1705 (AHSPVHSHLSLERGPQTPRATPTMSEES) is disordered. Residues Thr-1694 and Thr-1698 each carry the phosphothreonine modification. The stretch at 1715–1769 (QLEVMLKQLHTDLQKEKQDKVVLQSEVASLRQNNQRLQEESQAASEQLRKFAELF) forms a coiled coil.

The protein resides in the apical cell membrane. In terms of biological role, plays a critical role in epithelial cell morphogenesis, polarity, adhesion and cytoskeletal organization in the lens. The sequence is that of Signal-induced proliferation-associated 1-like protein 3 (Sipa1l3) from Mus musculus (Mouse).